Consider the following 247-residue polypeptide: ATP synthase subunit a, chloroplastic (247 aa).

Transmembrane regions (helical) follow at residues 38–58, 95–115, 134–154, 199–219, and 220–240; these read QVLITSWVVITILLGSVIIAV, VPFIGTMFLFIFVSNWSGALL, INTTVALALLTSAAYFYAGLS, LVVVVLVSLVPLVVPIPVMFL, and GLFTSGIQALIFATLAAAYIG.

Belongs to the ATPase A chain family. F-type ATPases have 2 components, CF(1) - the catalytic core - and CF(0) - the membrane proton channel. CF(1) has five subunits: alpha(3), beta(3), gamma(1), delta(1), epsilon(1). CF(0) has four main subunits: a, b, b' and c.

It is found in the plastid. The protein resides in the chloroplast thylakoid membrane. Its function is as follows. Key component of the proton channel; it plays a direct role in the translocation of protons across the membrane. In Zea mays (Maize), this protein is ATP synthase subunit a, chloroplastic.